The chain runs to 273 residues: Secretory carrier-associated membrane protein 6 (273 aa).

The interval 1 to 69 (MHHDPNPFDE…MGDSKSKARE (69 aa)) is disordered. Over 1–131 (MHHDPNPFDE…LQKLQYLAFA (131 aa)) the chain is Cytoplasmic. Gly residues predominate over residues 20–30 (NGGGGGGGGGS). A coiled-coil region spans residues 68–94 (RELSSWETDLKRREADIKRREEALRNA). 4 consecutive transmembrane segments (helical) span residues 132–152 (SWLG…VCWI), 159–179 (LFFL…LIWY), 194–214 (FGWF…AAIA), and 239–259 (IIGI…LLSI). Over 260–273 (GVLQRVYMYFRGNK) the chain is Cytoplasmic.

This sequence belongs to the SCAMP family.

The protein resides in the cell membrane. It localises to the cytoplasmic vesicle. It is found in the secretory vesicle membrane. In terms of biological role, probably involved in membrane trafficking. The sequence is that of Secretory carrier-associated membrane protein 6 (SCAMP6) from Oryza sativa subsp. japonica (Rice).